A 65-amino-acid polypeptide reads, in one-letter code: Large ribosomal subunit protein bL35 (65 aa).

It belongs to the bacterial ribosomal protein bL35 family.

The polypeptide is Large ribosomal subunit protein bL35 (Edwardsiella ictaluri (strain 93-146)).